A 483-amino-acid chain; its full sequence is Cobyric acid synthase (483 aa).

Residues 252 to 430 (ALQVVAVAYP…LHRLFDSGPF (179 aa)) form the GATase cobBQ-type domain. Cys-333 (nucleophile) is an active-site residue. Residue His-422 is part of the active site.

Belongs to the CobB/CobQ family. CobQ subfamily.

It functions in the pathway cofactor biosynthesis; adenosylcobalamin biosynthesis. Its function is as follows. Catalyzes amidations at positions B, D, E, and G on adenosylcobyrinic A,C-diamide. NH(2) groups are provided by glutamine, and one molecule of ATP is hydrogenolyzed for each amidation. The protein is Cobyric acid synthase of Halorhodospira halophila (strain DSM 244 / SL1) (Ectothiorhodospira halophila (strain DSM 244 / SL1)).